A 289-amino-acid chain; its full sequence is Zinc finger matrin-type protein 3 (289 aa).

A disordered region spans residues 1–59 (MILLQHAGLPPPKRPSSSPPMSVAARSTGALQLPPQKPFGQEASLPLAGEEEPPKGGEQ). Residues 9-18 (LPPPKRPSSS) show a composition bias toward pro residues. Matrin-type zinc fingers lie at residues 70–100 (LYCK…KLRN) and 147–177 (DYCK…RLRL). Over residues 180-191 (AQSNSFSDSSEV) the composition is skewed to polar residues. The disordered stretch occupies residues 180 to 200 (AQSNSFSDSSEVGQRRTRKEG). A Matrin-type 3 zinc finger spans residues 246–276 (FYCSMCNVGAGEEVEFRQHLESKQHKSKVSE).

In terms of assembly, interacts with dsRNA.

It localises to the nucleus. The protein resides in the nucleolus. Its function is as follows. Acts as a bona fide target gene of p53/TP53. May play a role in the TP53-dependent growth regulatory pathway. May contribute to TP53-mediated apoptosis by regulation of TP53 expression and translocation to the nucleus and nucleolus. The sequence is that of Zinc finger matrin-type protein 3 from Bos taurus (Bovine).